A 193-amino-acid polypeptide reads, in one-letter code: Probable type II restriction enzyme HpyAORF263P (193 aa).

Belongs to the BsaWI type II restriction endonuclease family.

The catalysed reaction is Endonucleolytic cleavage of DNA to give specific double-stranded fragments with terminal 5'-phosphates.. Its function is as follows. A P subtype probable restriction enzyme that recognizes the double-stranded sequence CCGG; the cleavage site is unknown. The sequence is that of Probable type II restriction enzyme HpyAORF263P from Helicobacter pylori (strain ATCC 700392 / 26695) (Campylobacter pylori).